Consider the following 163-residue polypeptide: Probable cyclic pyranopterin monophosphate synthase (163 aa).

The interval 1–23 (MPDGDDDALTHTTADGDAQMVDV) is disordered. Residues 80–82 (MCH) and 116–117 (ME) contribute to the substrate site. Aspartate 131 is a catalytic residue.

The protein belongs to the MoaC family. Homohexamer; trimer of dimers.

The enzyme catalyses (8S)-3',8-cyclo-7,8-dihydroguanosine 5'-triphosphate = cyclic pyranopterin phosphate + diphosphate. The protein operates within cofactor biosynthesis; molybdopterin biosynthesis. Functionally, catalyzes the conversion of (8S)-3',8-cyclo-7,8-dihydroguanosine 5'-triphosphate to cyclic pyranopterin monophosphate (cPMP). The polypeptide is Probable cyclic pyranopterin monophosphate synthase (Halobacterium salinarum (strain ATCC 29341 / DSM 671 / R1)).